Consider the following 856-residue polypeptide: Structure-specific endonuclease subunit SLX4 (856 aa).

Residues 1–19 (MDNAAIASQSNTPPSNGRS) are compositionally biased toward polar residues. Disordered regions lie at residues 1 to 24 (MDNA…ARFV), 39 to 61 (IEPS…SKSP), 88 to 121 (VDSP…HKMA), 139 to 201 (KTRK…TDNE), 296 to 326 (GIQT…KKPQ), 362 to 392 (KKMG…GNGP), 621 to 640 (SKSS…SQGD), 653 to 688 (RSDS…SNEG), and 715 to 742 (DSVG…QDCD). The span at 51-60 (STLLTSLSKS) shows a compositional bias: low complexity. A compositionally biased stretch (basic residues) spans 139 to 152 (KTRKKKAATAKRTR). Over residues 296 to 309 (GIQTPTESRPATND) the composition is skewed to polar residues. The span at 673-686 (SVKSQESKSFSLSN) shows a compositional bias: polar residues.

It belongs to the SLX4 family. As to quaternary structure, forms a heterodimer with SLX1. Phosphorylated in response to DNA damage.

It is found in the nucleus. Regulatory subunit of the SLX1-SLX4 structure-specific endonuclease that resolves DNA secondary structures generated during DNA repair and recombination. Has endonuclease activity towards branched DNA substrates, introducing single-strand cuts in duplex DNA close to junctions with ss-DNA. This is Structure-specific endonuclease subunit SLX4 from Ajellomyces dermatitidis (strain ER-3 / ATCC MYA-2586) (Blastomyces dermatitidis).